The following is a 287-amino-acid chain: Arylamine N-acetyltransferase, liver isozyme (287 aa).

C68 (acyl-thioester intermediate) is an active-site residue. Catalysis depends on residues H107 and D122.

It belongs to the arylamine N-acetyltransferase family.

The enzyme catalyses an arylamine + acetyl-CoA = an N-acetylarylamine + CoA. The polypeptide is Arylamine N-acetyltransferase, liver isozyme (Gallus gallus (Chicken)).